Consider the following 135-residue polypeptide: NAD(P)H-quinone oxidoreductase subunit 3 (135 aa).

The next 3 helical transmembrane spans lie at 15–35 (IVFFLSGYEYFLGFLMISSLV), 79–99 (MFALVFVIFDVETVFLYPWAV), and 104–124 (LGLLAFIEALIFIAILVVALV).

Belongs to the complex I subunit 3 family. As to quaternary structure, NDH-1 can be composed of about 15 different subunits; different subcomplexes with different compositions have been identified which probably have different functions.

The protein localises to the cellular thylakoid membrane. It catalyses the reaction a plastoquinone + NADH + (n+1) H(+)(in) = a plastoquinol + NAD(+) + n H(+)(out). It carries out the reaction a plastoquinone + NADPH + (n+1) H(+)(in) = a plastoquinol + NADP(+) + n H(+)(out). In terms of biological role, NDH-1 shuttles electrons from an unknown electron donor, via FMN and iron-sulfur (Fe-S) centers, to quinones in the respiratory and/or the photosynthetic chain. The immediate electron acceptor for the enzyme in this species is believed to be plastoquinone. Couples the redox reaction to proton translocation, and thus conserves the redox energy in a proton gradient. Cyanobacterial NDH-1 also plays a role in inorganic carbon-concentration. The chain is NAD(P)H-quinone oxidoreductase subunit 3 from Trichodesmium erythraeum (strain IMS101).